Consider the following 91-residue polypeptide: Essential MCU regulator, mitochondrial (91 aa).

A helical membrane pass occupies residues 45–65; it reads VIPFGLLGVVLTVIPGLLIGA.

It belongs to the SMDT1/EMRE family.

The protein resides in the mitochondrion inner membrane. In terms of biological role, essential regulatory subunit of the mitochondrial calcium uniporter (mcu) channel, a protein that mediates calcium uptake into mitochondria. The chain is Essential MCU regulator, mitochondrial from Aedes aegypti (Yellowfever mosquito).